Reading from the N-terminus, the 511-residue chain is Probable cytochrome P450 4d21 (511 aa).

Heme is bound at residue Cys-456.

Belongs to the cytochrome P450 family. It depends on heme as a cofactor.

Its subcellular location is the endoplasmic reticulum membrane. It localises to the microsome membrane. Its function is as follows. May be involved in the metabolism of insect hormones and in the breakdown of synthetic insecticides. This chain is Probable cytochrome P450 4d21 (Cyp4d21), found in Drosophila melanogaster (Fruit fly).